The sequence spans 241 residues: Cysteine-rich secretory protein 3 (241 aa).

Residues 1–19 (MALMLVLFFLAAVLPPSLL) form the signal peptide. In terms of domain architecture, SCP spans 44–170 (SKHNQLRRKV…PLRYFYVCRY (127 aa)). N-linked (GlcNAc...) asparagine glycans are attached at residues Asn118, Asn132, and Asn175. 5 disulfide bridges follow: Cys194/Cys201, Cys197/Cys206, Cys210/Cys241, Cys219/Cys235, and Cys226/Cys239. The ShKT domain occupies 210 to 241 (CQYKDMSFWCKRLEYVCKHPGLKKRCLATCQC).

Belongs to the CRISP family. As to quaternary structure, interacts with A1BG. Interacts with KNG1 isoform LMW. Expressed in submandibular gland.

It is found in the cytoplasmic vesicle. The protein resides in the secretory vesicle. Functionally, this protein is supposed to help spermatozoa undergo functional maturation while they move from the testis to the ductus deferens. This chain is Cysteine-rich secretory protein 3 (Crisp3), found in Mus musculus (Mouse).